The primary structure comprises 999 residues: uncharacterized protein (999 aa).

Residues 45–128 (NSNNIGNGNG…TPTITPSSPS (84 aa)) show a composition bias toward low complexity. Residues 45–129 (NSNNIGNGNG…PTITPSSPSV (85 aa)) form a disordered region. Residues 723 to 767 (YQQSQQQQSQQQQQQQQQQQQQQQQQQQQQQQQQQQQQQQQQQQQ) adopt a coiled-coil conformation. Residues 873-887 (NDINNANNSNNNNNN) are compositionally biased toward low complexity. The disordered stretch occupies residues 873-904 (NDINNANNSNNNNNNQSQVLLSPNRNKDGTLN). Residues 976–996 (LFSLVLILAFIWFFFEIYFFF) form a helical membrane-spanning segment.

It localises to the membrane. This is an uncharacterized protein from Dictyostelium discoideum (Social amoeba).